We begin with the raw amino-acid sequence, 189 residues long: Bilin-binding protein (189 aa).

The N-terminal stretch at 1–15 (MQYLIVLALVAAASA) is a signal peptide. 2 cysteine pairs are disulfide-bonded: Cys-23/Cys-130 and Cys-57/Cys-185.

It belongs to the calycin superfamily. Lipocalin family. As to quaternary structure, homotetramer. As to expression, hemolymph.

It localises to the secreted. In terms of biological role, this protein binds the blue pigments bilins. This Pieris brassicae (White butterfly) protein is Bilin-binding protein.